A 103-amino-acid polypeptide reads, in one-letter code: Small ribosomal subunit protein uS10 (103 aa).

Belongs to the universal ribosomal protein uS10 family. As to quaternary structure, part of the 30S ribosomal subunit.

Functionally, involved in the binding of tRNA to the ribosomes. The polypeptide is Small ribosomal subunit protein uS10 (Campylobacter fetus subsp. fetus (strain 82-40)).